The chain runs to 177 residues: Protein-export protein SecB (177 aa).

The protein belongs to the SecB family. As to quaternary structure, homotetramer, a dimer of dimers. One homotetramer interacts with 1 SecA dimer.

The protein localises to the cytoplasm. Its function is as follows. One of the proteins required for the normal export of preproteins out of the cell cytoplasm. It is a molecular chaperone that binds to a subset of precursor proteins, maintaining them in a translocation-competent state. It also specifically binds to its receptor SecA. The chain is Protein-export protein SecB from Ehrlichia canis (strain Jake).